A 192-amino-acid polypeptide reads, in one-letter code: uncharacterized protein (192 aa).

The Nudix hydrolase domain occupies 29-160; that stretch reads HRQAAVLIPI…PLDIYRRGDS (132 aa). A Nudix box motif is present at residues 67–89; sequence GAVDDTDASVIAAALREAEEEVA. Glu83 and Glu87 together coordinate Mg(2+).

Belongs to the Nudix hydrolase family. PCD1 subfamily. The cofactor is Mn(2+). Mg(2+) is required as a cofactor.

Probably mediates the hydrolysis of some nucleoside diphosphate derivatives. This is an uncharacterized protein from Shigella boydii serotype 4 (strain Sb227).